The sequence spans 232 residues: 2-C-methyl-D-erythritol 4-phosphate cytidylyltransferase (232 aa).

This sequence belongs to the IspD/TarI cytidylyltransferase family. IspD subfamily.

The enzyme catalyses 2-C-methyl-D-erythritol 4-phosphate + CTP + H(+) = 4-CDP-2-C-methyl-D-erythritol + diphosphate. It functions in the pathway isoprenoid biosynthesis; isopentenyl diphosphate biosynthesis via DXP pathway; isopentenyl diphosphate from 1-deoxy-D-xylulose 5-phosphate: step 2/6. Functionally, catalyzes the formation of 4-diphosphocytidyl-2-C-methyl-D-erythritol from CTP and 2-C-methyl-D-erythritol 4-phosphate (MEP). This Bacillus velezensis (strain DSM 23117 / BGSC 10A6 / LMG 26770 / FZB42) (Bacillus amyloliquefaciens subsp. plantarum) protein is 2-C-methyl-D-erythritol 4-phosphate cytidylyltransferase.